Here is a 525-residue protein sequence, read N- to C-terminus: MAGLWLGLVWQKLLLWGAASALSLAGASLVLSLLQRVASYARKWQQMRPIPTVARAYPLVGHALLMKPDGREFFQQIIEYTEEYRHMPLLKLWVGPVPMVALYNAENVEVILTSSKQIDKSSMYKFLEPWLGLGLLTSTGNKWRSRRKMLTPTFHFTILEDFLDIMNEQANILVKKLEKHINQEAFNCFFYITLCALDIICETAMGKNIGAQSNDDSEYVRAVYRMSEMIFRRIKMPWLWLDLWYLMFKEGWEHKKSLQILHTFTNSVIAERANEMNANEDCRGDGRGSAPSKNKRRAFLDLLLSVTDDEGNRLSHEDIREEVDTFMFEGHDTTAAAINWSLYLLGSNPEVQKKVDHELDDVFGKSDRPATVEDLKKLRYLECVIKETLRLFPSVPLFARSVSEDCEVAGYRVLKGTEAVIIPYALHRDPRYFPNPEEFQPERFFPENAQGRHPYAYVPFSAGPRNCIGQKFAVMEEKTILSCILRHFWIESNQKREELGLEGQLILRPSNGIWIKLKRRNADER.

A helical membrane pass occupies residues 13 to 33 (LLLWGAASALSLAGASLVLSL). Glu329 and Cys467 together coordinate heme.

It belongs to the cytochrome P450 family. Requires heme as cofactor. Broadly expressed. Detected in heart, brain, placenta, lung, liver, skeletal muscle, kidney, pancreas, retina, retinal pigment epithelium (RPE) and lymphocytes.

The protein resides in the endoplasmic reticulum membrane. The enzyme catalyses dodecanoate + reduced [NADPH--hemoprotein reductase] + O2 = 12-hydroxydodecanoate + oxidized [NADPH--hemoprotein reductase] + H2O + H(+). It carries out the reaction tetradecanoate + reduced [NADPH--hemoprotein reductase] + O2 = 14-hydroxytetradecanoate + oxidized [NADPH--hemoprotein reductase] + H2O + H(+). The catalysed reaction is hexadecanoate + reduced [NADPH--hemoprotein reductase] + O2 = 16-hydroxyhexadecanoate + oxidized [NADPH--hemoprotein reductase] + H2O + H(+). It catalyses the reaction (5Z,8Z,11Z,14Z,17Z)-eicosapentaenoate + reduced [NADPH--hemoprotein reductase] + O2 = 20-hydroxy-(5Z,8Z,11Z,14Z,17Z)-eicosapentaenoate + oxidized [NADPH--hemoprotein reductase] + H2O + H(+). The enzyme catalyses (4Z,7Z,10Z,13Z,16Z,19Z)-docosahexaenoate + reduced [NADPH--hemoprotein reductase] + O2 = 22-hydroxy-(4Z,7Z,10Z,13Z,16Z,19Z)-docosahexaenoate + oxidized [NADPH--hemoprotein reductase] + H2O + H(+). It participates in lipid metabolism; fatty acid metabolism. With respect to regulation, inhibited by N-hydroxy-N'-(4-n-butyl-2-methylphenyl formamidine)(HET0016) with an IC(50) of 38 nM. A cytochrome P450 monooxygenase involved in fatty acid metabolism in the eye. Catalyzes the omega-hydroxylation of polyunsaturated fatty acids (PUFAs) docosahexaenoate (DHA) and its precursor eicosapentaenoate (EPA), and may contribute to the homeostasis of these retinal PUFAs. Omega hydroxylates saturated fatty acids such as laurate, myristate and palmitate, the catalytic efficiency decreasing in the following order: myristate &gt; laurate &gt; palmitate (C14&gt;C12&gt;C16). Mechanistically, uses molecular oxygen inserting one oxygen atom into a substrate, and reducing the second into a water molecule, with two electrons provided by NADPH via cytochrome P450 reductase (CPR; NADPH-ferrihemoprotein reductase). This is Cytochrome P450 4V2 (CYP4V2) from Homo sapiens (Human).